We begin with the raw amino-acid sequence, 1130 residues long: Sodium/potassium/calcium exchanger 1 (1130 aa).

Over Met1–Gln419 the chain is Extracellular. Residues Pro104–Glu209 form a disordered region. Polar residues predominate over residues Leu125–Thr136. Positions Pro170–Arg187 are enriched in basic and acidic residues. N-linked (GlcNAc...) asparagine glycosylation is found at Asn176 and Asn273. Positions Ile274 to Thr295 are disordered. Positions Thr286–Thr295 are enriched in polar residues. A helical transmembrane segment spans residues Gly420–Cys440. Residues Asp441–Ala464 lie on the Cytoplasmic side of the membrane. One copy of the Alpha-1 repeat lies at Val461 to Phe501. The chain crosses the membrane as a helical span at residues Thr465–Ile485. The Extracellular portion of the chain corresponds to Ser486 to Asn489. The helical transmembrane segment at Val490–Cys510 threads the bilayer. Over Ala511–Ser530 the chain is Cytoplasmic. The helical transmembrane segment at Phe531 to Trp551 threads the bilayer. Residue Glu552 is a topological domain, extracellular. Residues Ser553 to Ile573 form a helical membrane-spanning segment. At Glu574 to Lys938 the chain is on the cytoplasmic side. Residues Pro598–Val619 form a disordered region. Phosphoserine is present on Ser625. The interval Gly650–Trp932 is disordered. A compositionally biased stretch (polar residues) spans Ser661–Glu675. Thr690 carries the post-translational modification Phosphothreonine. The segment covering Gln703 to Glu715 has biased composition (acidic residues). The segment covering Glu730–Asp751 has biased composition (basic and acidic residues). Composition is skewed to acidic residues over residues Gly766–Glu782 and Gln802–Glu820. A compositionally biased stretch (basic and acidic residues) spans Ala833–Gln855. Acidic residues-rich tracts occupy residues Gly870 to Cys880 and Asp896 to Leu928. The helical transmembrane segment at Gln939–Val959 threads the bilayer. Residues Arg960–Lys966 are Extracellular-facing. Residues Phe967–Val987 traverse the membrane as a helical segment. At Trp988–Glu1002 the chain is on the cytoplasmic side. Residues Ile1003–Ile1023 form a helical membrane-spanning segment. The stretch at Ala1010–Asn1041 is one Alpha-2 repeat. Topologically, residues Val1024–Asn1041 are extracellular. A helical membrane pass occupies residues Ile1042–Leu1062. At Gln1063 to Asn1070 the chain is on the cytoplasmic side. Residues Gly1071–Ala1091 form a helical membrane-spanning segment. Residues Ser1092 to Lys1099 lie on the Extracellular side of the membrane. Residues Ile1100–Glu1120 form a helical membrane-spanning segment. The Cytoplasmic segment spans residues Asp1121–Val1130.

Belongs to the Ca(2+):cation antiporter (CaCA) (TC 2.A.19) family. SLC24A subfamily. In terms of processing, the uncleaved signal sequence is required for efficient membrane targeting and proper membrane integration and topology.

The protein localises to the cell membrane. It carries out the reaction Ca(2+)(out) + K(+)(out) + 4 Na(+)(in) = Ca(2+)(in) + K(+)(in) + 4 Na(+)(out). Calcium, potassium:sodium antiporter that transports 1 Ca(2+) and 1 K(+) in exchange for 4 Na(+). Critical component of the visual transduction cascade, controlling the calcium concentration of outer segments during light and darkness. Light causes a rapid lowering of cytosolic free calcium in the outer segment of both retinal rod and cone photoreceptors and the light-induced lowering of calcium is caused by extrusion via this protein which plays a key role in the process of light adaptation. In Mus musculus (Mouse), this protein is Sodium/potassium/calcium exchanger 1.